Reading from the N-terminus, the 476-residue chain is MNSAVQAQLAELGIEGYLNQHQHKSLLRFLTCGSVDDGKSTLIGRLLHDSKQIYEDQLAAVHNDSQRVGTTGSRPDLALLVDGLQAEREQGITIDVAYRYFSTQKRKFIIADTPGHEQYTRNMATGASTCDLAVILIDARKGVLDQTRRHSFISNLLGLKHFVVAVNKMDLVEFSQQRFEEIKAEYQAFSKNLRGETDIQIIPISALEGDNVVELSQQMAWYQGPTLLEILESVDVVKEKEAGEFRFPVQYVNRPNLDFRGFAGTISSGVVKVGDRITALPSGKSSTVARIVTFDGDLEQAQAGLAVTLTLADEIDISRGDLIVHHGANVELTNHLAADVVWMTEQPLQPGRDYDIKIAGKKTIGRVEHIHHQYDINNLSKHSAAELPLNGIGLCEWTFNESIALDNYQDCADTGGFIIIDRLTNVTVGAGMVSESLTEVTKASSDFSAFELELNALIRKHFPHWDAKDLSELLKK.

The tr-type G domain occupies 24 to 228 (KSLLRFLTCG…MAWYQGPTLL (205 aa)). Residues 33–40 (GSVDDGKS) are G1. GTP is bound at residue 33 to 40 (GSVDDGKS). The tract at residues 91 to 95 (GITID) is G2. The G3 stretch occupies residues 112-115 (DTPG). GTP contacts are provided by residues 112 to 116 (DTPGH) and 167 to 170 (NKMD). The segment at 167 to 170 (NKMD) is G4. The tract at residues 205–207 (SAL) is G5.

Belongs to the TRAFAC class translation factor GTPase superfamily. Classic translation factor GTPase family. CysN/NodQ subfamily. As to quaternary structure, heterodimer composed of CysD, the smaller subunit, and CysN.

The catalysed reaction is sulfate + ATP + H(+) = adenosine 5'-phosphosulfate + diphosphate. Its pathway is sulfur metabolism; hydrogen sulfide biosynthesis; sulfite from sulfate: step 1/3. Its function is as follows. With CysD forms the ATP sulfurylase (ATPS) that catalyzes the adenylation of sulfate producing adenosine 5'-phosphosulfate (APS) and diphosphate, the first enzymatic step in sulfur assimilation pathway. APS synthesis involves the formation of a high-energy phosphoric-sulfuric acid anhydride bond driven by GTP hydrolysis by CysN coupled to ATP hydrolysis by CysD. This is Sulfate adenylyltransferase subunit 1 from Vibrio vulnificus (strain CMCP6).